Consider the following 535-residue polypeptide: Alkaline phosphatase, placental type (535 aa).

Positions 1–22 (MLGPCMLLLLLLLGLRLQLSLG) are cleaved as a signal peptide. Asp-64 provides a ligand contact to Mg(2+). Zn(2+) is bound by residues Asp-64 and Ser-114. The active-site Phosphoserine intermediate is the Ser-114. A disulfide bond links Cys-143 and Cys-205. N-linked (GlcNAc...) asparagine glycosylation occurs at Asn-144. Ser-177 serves as a coordination point for Mg(2+). Position 238 (Glu-238) interacts with Ca(2+). A glycan (N-linked (GlcNAc...) asparagine) is linked at Asn-271. Ca(2+) is bound by residues Phe-291, Glu-292, and Asp-307. Glu-333 serves as a coordination point for Mg(2+). Positions 338, 342, 379, and 380 each coordinate Zn(2+). The interval 425–449 (DGARPDVTESESGSPEYRQQSAVPL) is disordered. Positions 434–446 (SESGSPEYRQQSA) are enriched in polar residues. His-454 lines the Zn(2+) pocket. A disulfide bridge connects residues Cys-489 and Cys-496. Asp-506 is lipidated: GPI-anchor amidated aspartate. A propeptide spans 507–535 (AAHPGRSVVPALLPLLAGTLLLLETATAP) (removed in mature form). A helical membrane pass occupies residues 513–529 (SVVPALLPLLAGTLLLL).

It belongs to the alkaline phosphatase family. As to quaternary structure, homodimer. The cofactor is Mg(2+). Requires Zn(2+) as cofactor. Ca(2+) is required as a cofactor. Detected in placenta (at protein level).

It is found in the cell membrane. The enzyme catalyses a phosphate monoester + H2O = an alcohol + phosphate. Alkaline phosphatase that can hydrolyze various phosphate compounds. This is Alkaline phosphatase, placental type from Homo sapiens (Human).